Consider the following 356-residue polypeptide: Heparan sulfate 2-O-sulfotransferase 1 (356 aa).

The Cytoplasmic portion of the chain corresponds to 1-11; it reads MGLLRIMMPPK. Residues 12–28 traverse the membrane as a helical; Signal-anchor for type II membrane protein segment; the sequence is LQLLAVVAFAVAMLFLE. A coiled-coil region spans residues 24–51; sequence MLFLENQIQKLEESRAKLERAIARHEVR. Over 29 to 356 the chain is Lumenal; the sequence is NQIQKLEESR…FYEKIYPKSN (328 aa). Positions 83, 84, 85, 86, 87, and 88 each coordinate adenosine 3',5'-bisphosphate. 2 N-linked (GlcNAc...) asparagine glycosylation sites follow: Asn108 and Asn127. Catalysis depends on residues His140 and His142. The adenosine 3',5'-bisphosphate site is built by Arg164 and Ser172. Intrachain disulfides connect Cys201/Cys209 and Cys222/Cys228. Adenosine 3',5'-bisphosphate contacts are provided by Tyr279, Ser285, Thr290, and Lys293.

Belongs to the sulfotransferase 3 family. As to quaternary structure, homotrimer. Interacts with the C5-epimerase GLCE. Post-translationally, N-glycosylated. Widely expressed. Expressed at higher level in lung and brain. Weakly expressed in spleen.

The protein localises to the golgi apparatus membrane. In terms of biological role, catalyzes the transfer of a sulfo group from 3'-phospho-5'-adenylyl sulfate (PAPS) to the 2-OH position of iduronic acid (IdoA) or glucuronic acid (GlcA) within the heparan sulfate (HS) chain and participates in HS biosynthesis. Required for metanephric development of kidney formation, suggesting that 2-O-sulfation within HS is essential for signaling between ureteric bud and metanephric mesenchyme. This is Heparan sulfate 2-O-sulfotransferase 1 from Mus musculus (Mouse).